A 151-amino-acid polypeptide reads, in one-letter code: D-aminoacyl-tRNA deacylase (151 aa).

Residues 139 to 140 (GP) carry the Gly-cisPro motif, important for rejection of L-amino acids motif.

The protein belongs to the DTD family. In terms of assembly, homodimer.

It is found in the cytoplasm. The enzyme catalyses glycyl-tRNA(Ala) + H2O = tRNA(Ala) + glycine + H(+). The catalysed reaction is a D-aminoacyl-tRNA + H2O = a tRNA + a D-alpha-amino acid + H(+). In terms of biological role, an aminoacyl-tRNA editing enzyme that deacylates mischarged D-aminoacyl-tRNAs. Also deacylates mischarged glycyl-tRNA(Ala), protecting cells against glycine mischarging by AlaRS. Acts via tRNA-based rather than protein-based catalysis; rejects L-amino acids rather than detecting D-amino acids in the active site. By recycling D-aminoacyl-tRNA to D-amino acids and free tRNA molecules, this enzyme counteracts the toxicity associated with the formation of D-aminoacyl-tRNA entities in vivo and helps enforce protein L-homochirality. This chain is D-aminoacyl-tRNA deacylase, found in Symbiobacterium thermophilum (strain DSM 24528 / JCM 14929 / IAM 14863 / T).